The following is a 387-amino-acid chain: Prostatic acid phosphatase (387 aa).

The first 34 residues, Met-1 to Ala-34, serve as a signal peptide directing secretion. Arg-45 contacts substrate. Residue His-46 is the Nucleophile of the active site. A substrate-binding site is contributed by Arg-49. An N-linked (GlcNAc...) asparagine glycan is attached at Asn-96. Arg-113 contributes to the substrate binding site. 3 disulfide bridges follow: Cys-163–Cys-374, Cys-217–Cys-315, and Cys-349–Cys-353. The N-linked (GlcNAc...) asparagine glycan is linked to Asn-222. His-291 lines the substrate pocket. Residue Asp-292 is the Proton donor of the active site. N-linked (GlcNAc...) asparagine glycosylation occurs at Asn-335.

Belongs to the histidine acid phosphatase family. In terms of assembly, homodimer; dimer formation is required for phosphatase activity.

The protein localises to the secreted. It catalyses the reaction a phosphate monoester + H2O = an alcohol + phosphate. The catalysed reaction is 1-(9Z-octadecenoyl)-sn-glycero-3-phosphate + H2O = 1-(9Z-octadecenoyl)-sn-glycerol + phosphate. The enzyme catalyses O-phospho-L-tyrosyl-[protein] + H2O = L-tyrosyl-[protein] + phosphate. Functionally, a non-specific tyrosine phosphatase that dephosphorylates a diverse number of substrates under acidic conditions (pH 4-6) including alkyl, aryl, and acyl orthophosphate monoesters and phosphorylated proteins. Has lipid phosphatase activity and inactivates lysophosphatidic acid in seminal plasma. The sequence is that of Prostatic acid phosphatase (ACP3) from Bos taurus (Bovine).